We begin with the raw amino-acid sequence, 146 residues long: Hemoglobin subunit beta-1 (146 aa).

A Globin domain is found at 2 to 146 (EWSSNERSTI…VISALSRQYF (145 aa)). 2 residues coordinate heme b: His-63 and His-92.

This sequence belongs to the globin family. In terms of assembly, heterotetramer of two alpha chains and two beta chains. Red blood cells.

Its function is as follows. Involved in oxygen transport from gills to the various peripheral tissues. In Muraena helena (Mediterranean moray), this protein is Hemoglobin subunit beta-1 (hbb1).